The primary structure comprises 296 residues: Transcription factor Pur-alpha 1 (296 aa).

The residue at position 1 (M1) is an N-acetylmethionine. 2 disordered regions span residues 1–25 (MEAN…GGGG) and 186–214 (IPGH…EETG). S207 is subject to Phosphoserine.

The protein belongs to the PUR DNA-binding protein family. Homodimer. Interacts with TCP20.

It localises to the nucleus. Its function is as follows. Transcription factor that specifically binds the purine-rich double-stranded telomeric repeated sequence 5'-AAACCCTAA-3' found in promoter telo boxes. This Arabidopsis thaliana (Mouse-ear cress) protein is Transcription factor Pur-alpha 1 (PURA1).